The primary structure comprises 246 residues: MQSDMTSRSEKLHVGIIMDGNGRWATRRGLSRLRGHEAGVETIRRIVEAAPKQGIGTLTLYAFSTDNWRRPKAEVAALMTLLRFYLANEVQSLVKNGVRLTVIGRRDRLPDGIANAIARAEAATAHGSTLHLRIAVDYSARDAILNAAAKAAALTSLTREAFSQLVTGEAGLRDVDLIIRTSGEKRLSDFLLWEGAYAELHFTERMWPEFDAGDLAEALAAFHGRERRFGGLQAIMPEEVPSLSRV.

Residue Asp19 is part of the active site. Asp19 is a Mg(2+) binding site. Residues 20 to 23 (GNGR), Trp24, Arg32, His36, and 64 to 66 (STD) contribute to the substrate site. The active-site Proton acceptor is the Asn67. Residues Trp68, Arg70, Arg180, and 186 to 188 (RLS) each bind substrate. Glu199 is a binding site for Mg(2+).

This sequence belongs to the UPP synthase family. As to quaternary structure, homodimer. It depends on Mg(2+) as a cofactor.

Catalyzes the condensation of isopentenyl diphosphate (IPP) with allylic pyrophosphates generating different type of terpenoids. The protein is Isoprenyl transferase 1 of Bradyrhizobium diazoefficiens (strain JCM 10833 / BCRC 13528 / IAM 13628 / NBRC 14792 / USDA 110).